Here is a 183-residue protein sequence, read N- to C-terminus: Ribulose bisphosphate carboxylase small subunit, chloroplastic 4 (183 aa).

A chloroplast-targeting transit peptide spans 1 to 57; that stretch reads MASSLMSNAATTMAAATTTAQANMVAPFNGLKSISAFPVTRKNNDITSVASNGGRVQ.

The protein belongs to the RuBisCO small chain family. Heterohexadecamer of 8 large and 8 small subunits.

Its subcellular location is the plastid. It localises to the chloroplast. RuBisCO catalyzes two reactions: the carboxylation of D-ribulose 1,5-bisphosphate, the primary event in carbon dioxide fixation, as well as the oxidative fragmentation of the pentose substrate. Both reactions occur simultaneously and in competition at the same active site. Although the small subunit is not catalytic it is essential for maximal activity. In Mesembryanthemum crystallinum (Common ice plant), this protein is Ribulose bisphosphate carboxylase small subunit, chloroplastic 4.